Here is a 422-residue protein sequence, read N- to C-terminus: Histidine--tRNA ligase (422 aa).

It belongs to the class-II aminoacyl-tRNA synthetase family. As to quaternary structure, homodimer.

The protein resides in the cytoplasm. It catalyses the reaction tRNA(His) + L-histidine + ATP = L-histidyl-tRNA(His) + AMP + diphosphate + H(+). The chain is Histidine--tRNA ligase from Lysinibacillus sphaericus (strain C3-41).